The sequence spans 138 residues: Small ribosomal subunit protein uS12 (138 aa).

The tract at residues 33–55 (KEHTNVSSPQKRGVCTRVGTMTP) is disordered. Asp-102 is subject to 3-methylthioaspartic acid.

The protein belongs to the universal ribosomal protein uS12 family. In terms of assembly, part of the 30S ribosomal subunit. Contacts proteins S8 and S17. May interact with IF1 in the 30S initiation complex.

Its function is as follows. With S4 and S5 plays an important role in translational accuracy. Interacts with and stabilizes bases of the 16S rRNA that are involved in tRNA selection in the A site and with the mRNA backbone. Located at the interface of the 30S and 50S subunits, it traverses the body of the 30S subunit contacting proteins on the other side and probably holding the rRNA structure together. The combined cluster of proteins S8, S12 and S17 appears to hold together the shoulder and platform of the 30S subunit. In Bacillus velezensis (strain DSM 23117 / BGSC 10A6 / LMG 26770 / FZB42) (Bacillus amyloliquefaciens subsp. plantarum), this protein is Small ribosomal subunit protein uS12.